The sequence spans 794 residues: Phenylalanine--tRNA ligase beta subunit (794 aa).

Residues 39–148 (APAFDNVVVA…SDAPVGQAIR (110 aa)) form the tRNA-binding domain. Positions 399–474 (PVRKPVLLRT…RLYGYDNIPS (76 aa)) constitute a B5 domain. Mg(2+) contacts are provided by aspartate 452, aspartate 458, glutamate 461, and glutamate 462. Positions 700-793 (SKFPPVIRDL…FEQAFGAQLR (94 aa)) constitute an FDX-ACB domain.

Belongs to the phenylalanyl-tRNA synthetase beta subunit family. Type 1 subfamily. Tetramer of two alpha and two beta subunits. It depends on Mg(2+) as a cofactor.

It is found in the cytoplasm. The enzyme catalyses tRNA(Phe) + L-phenylalanine + ATP = L-phenylalanyl-tRNA(Phe) + AMP + diphosphate + H(+). The protein is Phenylalanine--tRNA ligase beta subunit of Dechloromonas aromatica (strain RCB).